Here is a 112-residue protein sequence, read N- to C-terminus: MENRFEISMLIDYYGTLLTEKQFNVMTLYYNEDLSLAEIAEINKTSRQAIYDLIKRCCKQLHSYDEKLKLSKKIDKRYRIKEELMAELNKNSNLDEDIKKYIDEKLEEIINA.

The protein belongs to the UPF0122 family.

In terms of biological role, might take part in the signal recognition particle (SRP) pathway. This is inferred from the conservation of its genetic proximity to ftsY/ffh. May be a regulatory protein. In Clostridium perfringens (strain ATCC 13124 / DSM 756 / JCM 1290 / NCIMB 6125 / NCTC 8237 / Type A), this protein is UPF0122 protein CPF_1968.